Reading from the N-terminus, the 214-residue chain is Isochorismatase family protein 2B (214 aa).

This sequence belongs to the isochorismatase family.

This chain is Isochorismatase family protein 2B, found in Dictyostelium discoideum (Social amoeba).